Consider the following 629-residue polypeptide: ATP-dependent RNA helicase DeaD (629 aa).

The short motif at 6 to 34 is the Q motif element; it reads TTFADLGLKAPILEALNDLGYEKPSPIQA. The Helicase ATP-binding domain maps to 37 to 208; the sequence is IPHLLNGRDV…RRFMKEPQEV (172 aa). Residue 50–57 coordinates ATP; it reads AQTGSGKT. Positions 156–159 match the DEAD box motif; it reads DEAD. One can recognise a Helicase C-terminal domain in the interval 232–379; sequence KNEALVRFLE…EVELPNAELL (148 aa). 2 disordered regions span residues 438-481 and 560-629; these read LIVP…RERR and LGDA…GGDA. Composition is skewed to basic and acidic residues over residues 446–481 and 568–629; these read MRPK…RERR and GGER…GGDA.

It belongs to the DEAD box helicase family. DeaD/CsdA subfamily. In terms of assembly, interacts with the 50S ribosomal subunit upon shifting to 15 degrees Celsius. Also found associated with the RNA degradosome at 15 degrees Celsius; binds RNase E (rne).

The protein localises to the cytoplasm. The catalysed reaction is ATP + H2O = ADP + phosphate + H(+). Its function is as follows. DEAD-box RNA helicase involved in various cellular processes at low temperature, including ribosome biogenesis, mRNA degradation and translation initiation. Exhibits RNA-stimulated ATP hydrolysis and RNA unwinding activity at low temperature. Involved in 50S ribosomal subunit assembly, acting after SrmB, and could also play a role in the biogenesis of the 30S ribosomal subunit. In addition, is involved in mRNA decay, via formation of a cold-shock degradosome with RNase E. Also stimulates translation of some mRNAs, probably at the level of initiation. In Escherichia coli (strain K12), this protein is ATP-dependent RNA helicase DeaD.